A 130-amino-acid polypeptide reads, in one-letter code: uncharacterized protein (130 aa).

The disordered stretch occupies residues 1 to 28 (MELAKERNGPHQKHHGQCQNHCTSPNTV). The segment covering 17-28 (QCQNHCTSPNTV) has biased composition (polar residues).

This is an uncharacterized protein from Saccharomyces cerevisiae (strain ATCC 204508 / S288c) (Baker's yeast).